A 634-amino-acid chain; its full sequence is MSRLPVIVGFGGYNAAGRSSFHHGFRRMVIESMDPQARQETLAGLAVMMKLVKAEGGRYLAEDGTPLSPEDIERRYAERIFASTLVRRIEPQYLDPDAVHWHKVLELSPAEGQALTFKASPKQLPEPLPANWSIAPAEDGEVLVSIHERCEFKVDSYRALTVKSAGQLPTGFEPGELYNSRFHPRGLQMSVVAATDAIRSTGIDWKTIVDNVQPDEIAVFSGSIMSQLDDNGFGGLMQSRLKGHRVSAKQLPLGFNSMPTDFINAYVLGSVGMTGSITGACATFLYNLQKGIDVITSGQARVVIVGNSEAPILPECIEGYSAMGALATEEGLRLIEGRDDVDFRRASRPFGENCGFTLAESSQYVVLMDDELALRLGADIHGAVTDVFINADGFKKSISAPGPGNYLTVAKAVASAVQIVGLDTVRHASFVHAHGSSTPANRVTESEILDRVASAFGIDGWPVTAVKAYVGHSLATASADQLISALGTFKYGILPGIKTIDKVADDVHQQRLSISNRDMRQDKPLEVCFINSKGFGGNNASGVVLSPRIAEKMLRKRHGQAAFAAYVEKREQTRAAARAYDQRALQGDLEIIYNFGQDLIDEHAIEVSAEQVTVPGFSQPLVYKKDARFSDMLD.

The Ketosynthase family 3 (KS3) domain occupies 78-546 (ERIFASTLVR…GNNASGVVLS (469 aa)). Catalysis depends on for beta-ketoacyl synthase activity residues cysteine 281, histidine 434, and histidine 472.

This sequence belongs to the thiolase-like superfamily. Beta-ketoacyl-ACP synthases family. Homodimer.

The enzyme catalyses malonyl-[ACP] + acetyl-CoA + H(+) = 3-oxobutanoyl-[ACP] + CO2 + CoA. Its pathway is lipid metabolism; fatty acid biosynthesis. Its function is as follows. Involved in the initiation of the fatty acid biosynthesis. Catalyzes the condensation of acetyl coenzyme A (acetyl-CoA) with malonyl-acyl carrier protein (ACP) to make the fatty acid synthesis (FAS) primer beta-acetoacetyl-ACP. It can also use short-chain acyl-CoA as substrates, including butyryl-CoA, and hexanoyl-CoA, but does not use any of the longer chain acyl-CoA substrates. The chain is Beta-ketoacyl-[acyl-carrier-protein] synthase FabY (fabY) from Pseudomonas aeruginosa (strain ATCC 15692 / DSM 22644 / CIP 104116 / JCM 14847 / LMG 12228 / 1C / PRS 101 / PAO1).